Consider the following 482-residue polypeptide: MTASTEAAVVVLAAGAGTRMRSDTPKVLHTLAGRGMLAHVLHTVSEIDARHLVAVLGHDRERIAPEVARLSEELGRAIDVAVQDQQLGTGHAVNCGLTALPHDFAGMVVVTSGDVPLLDTATLTGLITSHGSGDAAATVLTTTLPDPTGYGRILRTQDHEIIGIVEQADATESQRTICEVNTGVYAFDIADLRSALTRLRSDNAQHELYLTDVVEILRQDHRTVRALHVDDSALVTGVNDRVQLSDLGKVLNRRIVAAHQRAGVTIIDPGSTWIDIDVQIGQDTVVHPGTQLLGATRVGSHCVIGPDTTLTHVTVGDGASVVRTHGSESVIGAGATVGPFTYLRPGTNLGADGKLGAFVETKNCTIGTGTKVPHLTYVGDADIGEYSNIGASSVFVNYDGENKSRTTIGSHVRTGSDTMFVAPVTVGDGAYTGAGTVLRDDVPPGALAVSAGPQRNIEGWVAKKRPGSAADKAARKALGDES.

The segment at 1–241 (MTASTEAAVV…SALVTGVNDR (241 aa)) is pyrophosphorylase. Residues 12 to 15 (LAAG), lysine 26, glutamine 83, 88 to 89 (GT), 112 to 114 (SGD), glycine 151, glutamate 166, asparagine 181, and asparagine 239 each bind UDP-N-acetyl-alpha-D-glucosamine. Aspartate 114 is a binding site for Mg(2+). Residue asparagine 239 coordinates Mg(2+). The tract at residues 242–262 (VQLSDLGKVLNRRIVAAHQRA) is linker. Residues 263 to 482 (GVTIIDPGST…AARKALGDES (220 aa)) form an N-acetyltransferase region. Residues arginine 344 and lysine 362 each contribute to the UDP-N-acetyl-alpha-D-glucosamine site. Histidine 374 functions as the Proton acceptor in the catalytic mechanism. UDP-N-acetyl-alpha-D-glucosamine contacts are provided by tyrosine 377 and asparagine 388. Residues alanine 391, 397–398 (NY), serine 416, and alanine 434 contribute to the acetyl-CoA site. Positions 463-482 (KKRPGSAADKAARKALGDES) are disordered. Residues 472-482 (KAARKALGDES) show a composition bias toward basic and acidic residues.

It in the N-terminal section; belongs to the N-acetylglucosamine-1-phosphate uridyltransferase family. This sequence in the C-terminal section; belongs to the transferase hexapeptide repeat family. In terms of assembly, homotrimer. Mg(2+) is required as a cofactor.

It localises to the cytoplasm. The catalysed reaction is alpha-D-glucosamine 1-phosphate + acetyl-CoA = N-acetyl-alpha-D-glucosamine 1-phosphate + CoA + H(+). It catalyses the reaction N-acetyl-alpha-D-glucosamine 1-phosphate + UTP + H(+) = UDP-N-acetyl-alpha-D-glucosamine + diphosphate. It participates in nucleotide-sugar biosynthesis; UDP-N-acetyl-alpha-D-glucosamine biosynthesis; N-acetyl-alpha-D-glucosamine 1-phosphate from alpha-D-glucosamine 6-phosphate (route II): step 2/2. Its pathway is nucleotide-sugar biosynthesis; UDP-N-acetyl-alpha-D-glucosamine biosynthesis; UDP-N-acetyl-alpha-D-glucosamine from N-acetyl-alpha-D-glucosamine 1-phosphate: step 1/1. The protein operates within bacterial outer membrane biogenesis; LPS lipid A biosynthesis. Catalyzes the last two sequential reactions in the de novo biosynthetic pathway for UDP-N-acetylglucosamine (UDP-GlcNAc). The C-terminal domain catalyzes the transfer of acetyl group from acetyl coenzyme A to glucosamine-1-phosphate (GlcN-1-P) to produce N-acetylglucosamine-1-phosphate (GlcNAc-1-P), which is converted into UDP-GlcNAc by the transfer of uridine 5-monophosphate (from uridine 5-triphosphate), a reaction catalyzed by the N-terminal domain. The polypeptide is Bifunctional protein GlmU (Mycolicibacterium smegmatis (strain ATCC 700084 / mc(2)155) (Mycobacterium smegmatis)).